A 446-amino-acid polypeptide reads, in one-letter code: Sulfoquinovose isomerase (446 aa).

The protein belongs to the SqvD family.

It catalyses the reaction 6-sulfo-beta-D-quinovose = 6-deoxy-6-sulfo-D-fructose. Functionally, part of the sulfo-TAL (or sulfo-SFT) pathway, a D-sulfoquinovose degradation pathway that produces sulfolactate (SL). Catalyzes the isomerization of sulfoquinovose (SQ) to 6-deoxy-6-sulfo-D-fructose (SF). This is Sulfoquinovose isomerase from Priestia aryabhattai (Bacillus aryabhattai).